A 261-amino-acid chain; its full sequence is Hydroxyethylthiazole kinase (261 aa).

M40 lines the substrate pocket. The ATP site is built by K116 and T162. G189 is a substrate binding site.

Belongs to the Thz kinase family. Requires Mg(2+) as cofactor.

It catalyses the reaction 5-(2-hydroxyethyl)-4-methylthiazole + ATP = 4-methyl-5-(2-phosphooxyethyl)-thiazole + ADP + H(+). It participates in cofactor biosynthesis; thiamine diphosphate biosynthesis; 4-methyl-5-(2-phosphoethyl)-thiazole from 5-(2-hydroxyethyl)-4-methylthiazole: step 1/1. Catalyzes the phosphorylation of the hydroxyl group of 4-methyl-5-beta-hydroxyethylthiazole (THZ). The sequence is that of Hydroxyethylthiazole kinase from Methanosarcina acetivorans (strain ATCC 35395 / DSM 2834 / JCM 12185 / C2A).